A 112-amino-acid polypeptide reads, in one-letter code: uncharacterized protein (112 aa).

This is an uncharacterized protein from Dictyostelium discoideum (Social amoeba).